The primary structure comprises 445 residues: ATP-dependent protease ATPase subunit HslU (445 aa).

ATP contacts are provided by residues isoleucine 17, 59–64 (GVGKTE), aspartate 254, glutamate 319, and arginine 391.

The protein belongs to the ClpX chaperone family. HslU subfamily. In terms of assembly, a double ring-shaped homohexamer of HslV is capped on each side by a ring-shaped HslU homohexamer. The assembly of the HslU/HslV complex is dependent on binding of ATP.

The protein resides in the cytoplasm. ATPase subunit of a proteasome-like degradation complex; this subunit has chaperone activity. The binding of ATP and its subsequent hydrolysis by HslU are essential for unfolding of protein substrates subsequently hydrolyzed by HslV. HslU recognizes the N-terminal part of its protein substrates and unfolds these before they are guided to HslV for hydrolysis. The protein is ATP-dependent protease ATPase subunit HslU of Pseudomonas syringae pv. tomato (strain ATCC BAA-871 / DC3000).